The sequence spans 1441 residues: ABC transporter G family member 41 (1441 aa).

Positions 1 to 14 are enriched in basic and acidic residues; sequence MEDKKQQQQQQREE. A disordered region spans residues 1 to 28; that stretch reads MEDKKQQQQQQREEAEAEEEAPVVPSSL. The ABC transporter 1 domain occupies 159–432; it reads ATARGLSRRP…FESCGFKCPE (274 aa). ATP is bound at residue 192–199; sequence GPPGCGKT. Residues 510 to 722 form the ABC transmembrane type-2 1 domain; it reads DLLKACFARE…AEIGLTGNEF (213 aa). The next 6 membrane-spanning stretches (helical) occupy residues 528 to 548, 566 to 586, 600 to 620, 642 to 662, 672 to 692, and 758 to 778; these read FIYITKVVQLGLLAVITGTVF, SLFYALILLLVNGFPELAIAV, FYPAWAYAIPSFILKIPLSLV, FFCQLLILFLVHTGALSLFRC, ASSVGGTMSFLVILLFGGFII, and ASALIGFILLLNVGYAIGLTI. Residues 838–1090 enclose the ABC transporter 2 domain; sequence ISFQDVNYYV…NVIHYFETIP (253 aa). 883-890 is an ATP binding site; that stretch reads GVTGAGKT. The 217-residue stretch at 1163 to 1379 folds into the ABC transmembrane type-2 2 domain; sequence EQLKACIWKQ…TLNVFFTTQF (217 aa). The next 7 helical transmembrane spans lie at 1187–1207, 1215–1235, 1272–1292, 1300–1320, 1329–1349, 1357–1377, and 1413–1433; these read ILFITISCIVFGVLFWQQGDI, GLFTILGCMYGTTLFTGINNC, IPYVLVQILLIMFIAYPMIGY, FWFMYTIACTLLYFLYFGMMI, VASILASMFYTLQNLMSGFIV, WWIWLYYTSPLSWTLNVFFTT, and LAAIILAMFPILFAILFGLSI.

Belongs to the ABC transporter superfamily. ABCG family. PDR (TC 3.A.1.205) subfamily.

Its subcellular location is the membrane. In terms of biological role, may be a general defense protein. This Oryza sativa subsp. japonica (Rice) protein is ABC transporter G family member 41.